Reading from the N-terminus, the 413-residue chain is Multifunctional CCA protein (413 aa).

Residues Gly-8 and Arg-11 each coordinate ATP. 2 residues coordinate CTP: Gly-8 and Arg-11. Residues Glu-21 and Asp-23 each contribute to the Mg(2+) site. Residues Arg-91, Arg-137, and Arg-140 each contribute to the ATP site. CTP is bound by residues Arg-91, Arg-137, and Arg-140. One can recognise an HD domain in the interval 228-329 (TGEHTLLALA…LKLLEGLDLF (102 aa)).

This sequence belongs to the tRNA nucleotidyltransferase/poly(A) polymerase family. Bacterial CCA-adding enzyme type 1 subfamily. As to quaternary structure, monomer. Can also form homodimers and oligomers. Requires Mg(2+) as cofactor. Ni(2+) is required as a cofactor.

It catalyses the reaction a tRNA precursor + 2 CTP + ATP = a tRNA with a 3' CCA end + 3 diphosphate. The catalysed reaction is a tRNA with a 3' CCA end + 2 CTP + ATP = a tRNA with a 3' CCACCA end + 3 diphosphate. Catalyzes the addition and repair of the essential 3'-terminal CCA sequence in tRNAs without using a nucleic acid template. Adds these three nucleotides in the order of C, C, and A to the tRNA nucleotide-73, using CTP and ATP as substrates and producing inorganic pyrophosphate. tRNA 3'-terminal CCA addition is required both for tRNA processing and repair. Also involved in tRNA surveillance by mediating tandem CCA addition to generate a CCACCA at the 3' terminus of unstable tRNAs. While stable tRNAs receive only 3'-terminal CCA, unstable tRNAs are marked with CCACCA and rapidly degraded. The polypeptide is Multifunctional CCA protein (Alkalilimnicola ehrlichii (strain ATCC BAA-1101 / DSM 17681 / MLHE-1)).